Reading from the N-terminus, the 627-residue chain is tRNA uridine 5-carboxymethylaminomethyl modification enzyme MnmG (627 aa).

FAD contacts are provided by residues G13 to G18, V125, and S180. G274–F288 serves as a coordination point for NAD(+). FAD is bound at residue Q371.

Belongs to the MnmG family. As to quaternary structure, homodimer. Heterotetramer of two MnmE and two MnmG subunits. Requires FAD as cofactor.

It is found in the cytoplasm. In terms of biological role, NAD-binding protein involved in the addition of a carboxymethylaminomethyl (cmnm) group at the wobble position (U34) of certain tRNAs, forming tRNA-cmnm(5)s(2)U34. The protein is tRNA uridine 5-carboxymethylaminomethyl modification enzyme MnmG of Francisella tularensis subsp. holarctica (strain FTNF002-00 / FTA).